We begin with the raw amino-acid sequence, 667 residues long: UvrABC system protein B (667 aa).

The Helicase ATP-binding domain maps to 25-414 (TGLQRGDKHQ…GVVVEQIIRP (390 aa)). Residue 38-45 (GVTGSGKT) coordinates ATP. Residues 91–114 (YYDYYQPEAYVPTTDTFIEKDSSI) carry the Beta-hairpin motif. One can recognise a Helicase C-terminal domain in the interval 430-596 (QVDDLIHEIR…TVKKSLRSIL (167 aa)). The UVR domain occupies 624 to 659 (KNEIARVKEEMLAAAANLEFEKAAELRDRMLELDKL).

The protein belongs to the UvrB family. As to quaternary structure, forms a heterotetramer with UvrA during the search for lesions. Interacts with UvrC in an incision complex.

It is found in the cytoplasm. Its function is as follows. The UvrABC repair system catalyzes the recognition and processing of DNA lesions. A damage recognition complex composed of 2 UvrA and 2 UvrB subunits scans DNA for abnormalities. Upon binding of the UvrA(2)B(2) complex to a putative damaged site, the DNA wraps around one UvrB monomer. DNA wrap is dependent on ATP binding by UvrB and probably causes local melting of the DNA helix, facilitating insertion of UvrB beta-hairpin between the DNA strands. Then UvrB probes one DNA strand for the presence of a lesion. If a lesion is found the UvrA subunits dissociate and the UvrB-DNA preincision complex is formed. This complex is subsequently bound by UvrC and the second UvrB is released. If no lesion is found, the DNA wraps around the other UvrB subunit that will check the other stand for damage. In Syntrophotalea carbinolica (strain DSM 2380 / NBRC 103641 / GraBd1) (Pelobacter carbinolicus), this protein is UvrABC system protein B.